The primary structure comprises 1199 residues: RNA-binding protein 20 (1199 aa).

Disordered regions lie at residues Met1–Ser55, Pro163–Ser186, and Glu320–Gln346. Residues Val25 to Gln42 show a composition bias toward low complexity. Residues Pro43 to Pro52 are compositionally biased toward pro residues. Residues Ser170 to Ser183 are compositionally biased toward low complexity. The U1-type zinc-finger motif lies at His410–Phe444. The RRM domain maps to Arg520–Arg595. The segment covering Glu626–Arg636 has biased composition (basic and acidic residues). 3 disordered regions span residues Glu626–Asp685, Arg720–Asn884, and Gly944–Cys1077. The segment at Tyr630 to Ser649 is RS. Phosphoserine is present on residues Ser637, Ser639, Ser642, Ser644, and Ser651. A compositionally biased stretch (low complexity) spans Arg638–Ser649. Residues Tyr667–Asp685 are compositionally biased toward basic and acidic residues. Ser728 carries the post-translational modification Phosphoserine. Composition is skewed to basic and acidic residues over residues Lys739–Pro758, Arg770–Gln831, and Glu859–Asp868. Ser787 is subject to Phosphoserine. Residues Ser871, Ser873, and Ser955 each carry the phosphoserine modification. Residues Val962–Asn971 are compositionally biased toward polar residues. A phosphoserine mark is found at Ser991, Ser1026, Ser1038, Ser1049, Ser1054, Ser1058, Ser1070, Ser1088, and Ser1093. Residues Asp1042 to His1055 are compositionally biased toward basic and acidic residues. The span at Pro1067–Cys1077 shows a compositional bias: polar residues. Residues Phe1133–Lys1164 form a Matrin-type zinc finger. The disordered stretch occupies residues Glu1172–Leu1199. Phosphoserine is present on residues Ser1182 and Ser1184.

In terms of assembly, associates with components of the U1 and U2 U1 small nuclear ribonucleoprotein complexes. Phosphorylation regulates the subcellular localization. Phosphorylation of Ser-637 and Ser-639 in the RS (arginine/serine-rich) region promotes nuclear localization of the protein. In contrast, phosphorylation of the C-terminal disordered region promotes localization to cytoplasmic ribonucleoprotein granules. Predominantly expressed in striated muscle, with highest expression in the heart. In differentiating myoblasts, expression correlates with sarcomere assembly: expression peaks when alpha-actinin is localized mainly in mature Z bodies within the nascent myofiber and expression declines as the sarcomeres continue to mature. Also expressed in kidney.

It is found in the nucleus. Its subcellular location is the cytoplasm. It localises to the cytoplasmic ribonucleoprotein granule. Functionally, RNA-binding protein that acts as a regulator of mRNA splicing of a subset of genes encoding key structural proteins involved in cardiac development, such as TTN (Titin), CACNA1C, CAMK2D or PDLIM5/ENH. Acts as a repressor of mRNA splicing: specifically binds the 5'UCUU-3' motif that is predominantly found within intronic sequences of pre-mRNAs, leading to the exclusion of specific exons in target transcripts. RBM20-mediated exon skipping is hormone-dependent and is essential for TTN isoform transition in both cardiac and skeletal muscles. RBM20-mediated exon skipping of TTN provides substrates for the formation of circular RNA (circRNAs) from the TTN transcripts. Together with RBM24, promotes the expression of short isoforms of PDLIM5/ENH in cardiomyocytes. In Mus musculus (Mouse), this protein is RNA-binding protein 20.